The chain runs to 825 residues: Penicillin-binding protein 1A (825 aa).

Over 1-6 (MKFIKR) the chain is Cytoplasmic. The helical; Signal-anchor for type II membrane protein transmembrane segment at 7-27 (LLVFSLICIILGVTTIFGFYF) threads the bilayer. The Periplasmic portion of the chain corresponds to 28 to 825 (YVKSDLPDVA…YSTSSGEELF (798 aa)). Residues 48 to 216 (MQVFSQDGKL…STMNPIYSVE (169 aa)) are transglycosylase. The Proton donor; for transglycosylase activity role is filled by E86. The transpeptidase stretch occupies residues 413–752 (PRTQDGAITA…GKTALPAWVE (340 aa)). S471 serves as the catalytic Acyl-ester intermediate; for transpeptidase activity.

The protein in the N-terminal section; belongs to the glycosyltransferase 51 family. In the C-terminal section; belongs to the transpeptidase family.

The protein localises to the cell inner membrane. The enzyme catalyses [GlcNAc-(1-&gt;4)-Mur2Ac(oyl-L-Ala-gamma-D-Glu-L-Lys-D-Ala-D-Ala)](n)-di-trans,octa-cis-undecaprenyl diphosphate + beta-D-GlcNAc-(1-&gt;4)-Mur2Ac(oyl-L-Ala-gamma-D-Glu-L-Lys-D-Ala-D-Ala)-di-trans,octa-cis-undecaprenyl diphosphate = [GlcNAc-(1-&gt;4)-Mur2Ac(oyl-L-Ala-gamma-D-Glu-L-Lys-D-Ala-D-Ala)](n+1)-di-trans,octa-cis-undecaprenyl diphosphate + di-trans,octa-cis-undecaprenyl diphosphate + H(+). It carries out the reaction Preferential cleavage: (Ac)2-L-Lys-D-Ala-|-D-Ala. Also transpeptidation of peptidyl-alanyl moieties that are N-acyl substituents of D-alanine.. It functions in the pathway cell wall biogenesis; peptidoglycan biosynthesis. Functionally, cell wall formation. Synthesis of cross-linked peptidoglycan from the lipid intermediates. The enzyme has a penicillin-insensitive transglycosylase N-terminal domain (formation of linear glycan strands) and a penicillin-sensitive transpeptidase C-terminal domain (cross-linking of the peptide subunits). In Vibrio cholerae serotype O1 (strain ATCC 39315 / El Tor Inaba N16961), this protein is Penicillin-binding protein 1A (mrcA).